The chain runs to 427 residues: Serine protease HTRA2, mitochondrial (427 aa).

The disordered stretch occupies residues 33 to 57; sequence HTASSSKGSGGDNSKDQENNGQNKS. A helical transmembrane segment spans residues 67-87; it reads VFQFCVPFSLGALVSAVLIEG. The IAP-binding signature appears at 78–81; it reads ALVS. The segment at 144 to 307 is serine protease; sequence SNGSGFVIEQ…IPIDYVKVFL (164 aa). Catalysis depends on charge relay system residues H162, D194, and S271. Residues 330–415 enclose the PDZ domain; it reads MGITMLTLTP…DLEIVILRGV (86 aa).

Belongs to the peptidase S1C family. As to quaternary structure, interacts with th/DIAP1 (via BIR 2 domain).

The protein resides in the mitochondrion intermembrane space. It is found in the mitochondrion membrane. It carries out the reaction Cleavage of non-polar aliphatic amino-acids at the P1 position, with a preference for Val, Ile and Met. At the P2 and P3 positions, Arg is selected most strongly with a secondary preference for other hydrophilic residues.. Its function is as follows. Serine protease that shows proteolytic activity against a non-specific substrate beta-casein. Promotes or induces cell death either by direct binding to and inhibition of BIRC proteins (also called inhibitor of apoptosis proteins, IAPs), leading to an increase in caspase activity, or by a BIRC inhibition-independent, caspase-independent and serine protease activity-dependent mechanism. Can antagonize antiapoptotic activity of th/Diap1 by directly inducing the degradation of th/Diap1. This chain is Serine protease HTRA2, mitochondrial, found in Drosophila persimilis (Fruit fly).